The following is a 379-amino-acid chain: 1-deoxy-D-xylulose 5-phosphate reductoisomerase (379 aa).

Threonine 10, glycine 11, serine 12, isoleucine 13, asparagine 39, and asparagine 121 together coordinate NADPH. Lysine 122 is a binding site for 1-deoxy-D-xylulose 5-phosphate. NADPH is bound at residue glutamate 123. Position 147 (aspartate 147) interacts with Mn(2+). Residues serine 148, glutamate 149, serine 173, and histidine 196 each coordinate 1-deoxy-D-xylulose 5-phosphate. Position 149 (glutamate 149) interacts with Mn(2+). Residue glycine 202 coordinates NADPH. The 1-deoxy-D-xylulose 5-phosphate site is built by serine 209, asparagine 214, lysine 215, and glutamate 218. Residue glutamate 218 coordinates Mn(2+).

This sequence belongs to the DXR family. The cofactor is Mg(2+). Requires Mn(2+) as cofactor.

The catalysed reaction is 2-C-methyl-D-erythritol 4-phosphate + NADP(+) = 1-deoxy-D-xylulose 5-phosphate + NADPH + H(+). It participates in isoprenoid biosynthesis; isopentenyl diphosphate biosynthesis via DXP pathway; isopentenyl diphosphate from 1-deoxy-D-xylulose 5-phosphate: step 1/6. Its function is as follows. Catalyzes the NADPH-dependent rearrangement and reduction of 1-deoxy-D-xylulose-5-phosphate (DXP) to 2-C-methyl-D-erythritol 4-phosphate (MEP). This chain is 1-deoxy-D-xylulose 5-phosphate reductoisomerase, found in Chlamydia felis (strain Fe/C-56) (Chlamydophila felis).